The following is a 299-amino-acid chain: Plasmodesmata-located protein 5 (299 aa).

A signal peptide spans 1–25 (MIKTKTTSLLCFLLTAVILMNPSSS). The Extracellular portion of the chain corresponds to 26 to 264 (SPTDNYIYAV…NKDDNGVGKT (239 aa)). Gnk2-homologous domains lie at 29-135 (DNYI…NKSF) and 137-237 (GVQD…VGGS). Disulfide bonds link cysteine 36–cysteine 113, cysteine 89–cysteine 98, cysteine 101–cysteine 126, cysteine 148–cysteine 215, cysteine 191–cysteine 200, and cysteine 203–cysteine 228. A helical transmembrane segment spans residues 265-285 (LAIIIGIVTLIILLVVFLAFV). The tract at residues 265–285 (LAIIIGIVTLIILLVVFLAFV) is necessary and sufficient for plasmodesmal targeting. At 286–299 (GKCCRKLQDEKWCK) the chain is on the cytoplasmic side.

This sequence belongs to the cysteine-rich repeat secretory protein family. Plasmodesmata-located proteins (PDLD) subfamily. Monomer. Interacts with PDLP1. In terms of assembly, (Microbial infection) Interacts with Grapevine fanleaf virus (GFLV) 2B-MP. Highly expressed in inflorescence nodes and rosette senescent leaves. Mostly expressed in cell wall junctions between leaf epidermal and mesophyl cells, and to a lesser extent at the cross walls between epidermal or cortex cells within the hypocotyl (at protein level). Low vascular expression in seedling and mature leaf, but high expression in senescing leaves (at protein level).

It localises to the cell membrane. Its subcellular location is the cell junction. The protein resides in the plasmodesma. Functionally, modulates cell-to-cell trafficking. Has a positive role in innate immunity. Required for systemic acquired resistance (SAR) which is mediated by the signaling molecules azelaic acid (AzA), glycerol-3-phosphate (G3P), and salicylic acid (SA). Negative regulator of plasmodesmata permeability triggered by SA during immune responses, through regulation of callose deposition. Delays the trafficking of Tobacco Mosaic Virus (TMV) movement protein (MP). Required for symplastic signal transport. In Arabidopsis thaliana (Mouse-ear cress), this protein is Plasmodesmata-located protein 5.